The chain runs to 633 residues: DEAD-box ATP-dependent RNA helicase 27 (633 aa).

Basic and acidic residues predominate over residues 1 to 17; the sequence is MANLDMEQHSSENEEIK. The interval 1–147 is disordered; the sequence is MANLDMEQHS…DKEEEKKLEE (147 aa). Residues 2 to 34 are a coiled coil; sequence ANLDMEQHSSENEEIKKKKHKKRARDEAKKLKQ. 2 stretches are compositionally biased toward acidic residues: residues 37-47 and 74-83; these read MEEEPDHEDGD and DDGEDEAVAE. The span at 88 to 97 shows a compositional bias: basic residues; sequence KKKKKNKKLQ. 2 stretches are compositionally biased toward acidic residues: residues 103 to 114 and 131 to 140; these read NDEEDEVIAEEE and SEEEEVEDKE. Positions 117–153 form a coiled coil; sequence KKKKKKQRKDTEAKSEEEEVEDKEEEKKLEETSIMTN. The Q motif motif lies at 154–182; the sequence is KTFESLSLSDNTYKSIKEMGFARMTQIQA. The 176-residue stretch at 185-360 folds into the Helicase ATP-binding domain; sequence IPPLMMGEDV…RVSLTSPVYI (176 aa). Residue 198 to 205 coordinates ATP; it reads ARTGSGKT. The short motif at 308-311 is the DEAD box element; sequence DEAD. One can recognise a Helicase C-terminal domain in the interval 386–534; that stretch reads RLLFLLTFLK…EHEFEEKKLL (149 aa). Residues 608 to 633 form a disordered region; the sequence is KREPVNKFKRGRGGGRPGGKSKFERY.

This sequence belongs to the DEAD box helicase family. DDX18/HAS1 subfamily.

The catalysed reaction is ATP + H2O = ADP + phosphate + H(+). The protein is DEAD-box ATP-dependent RNA helicase 27 (RH27) of Arabidopsis thaliana (Mouse-ear cress).